A 495-amino-acid polypeptide reads, in one-letter code: Aspartyl/glutamyl-tRNA(Asn/Gln) amidotransferase subunit B (495 aa).

This sequence belongs to the GatB/GatE family. GatB subfamily. In terms of assembly, heterotrimer of A, B and C subunits.

It carries out the reaction L-glutamyl-tRNA(Gln) + L-glutamine + ATP + H2O = L-glutaminyl-tRNA(Gln) + L-glutamate + ADP + phosphate + H(+). The enzyme catalyses L-aspartyl-tRNA(Asn) + L-glutamine + ATP + H2O = L-asparaginyl-tRNA(Asn) + L-glutamate + ADP + phosphate + 2 H(+). Functionally, allows the formation of correctly charged Asn-tRNA(Asn) or Gln-tRNA(Gln) through the transamidation of misacylated Asp-tRNA(Asn) or Glu-tRNA(Gln) in organisms which lack either or both of asparaginyl-tRNA or glutaminyl-tRNA synthetases. The reaction takes place in the presence of glutamine and ATP through an activated phospho-Asp-tRNA(Asn) or phospho-Glu-tRNA(Gln). The polypeptide is Aspartyl/glutamyl-tRNA(Asn/Gln) amidotransferase subunit B (Beijerinckia indica subsp. indica (strain ATCC 9039 / DSM 1715 / NCIMB 8712)).